Here is a 469-residue protein sequence, read N- to C-terminus: Glutamate--tRNA ligase (469 aa).

The 'HIGH' region motif lies at Pro-9–Gly-19. The 'KMSKS' region signature appears at Lys-236–Arg-240. Lys-239 serves as a coordination point for ATP.

The protein belongs to the class-I aminoacyl-tRNA synthetase family. Glutamate--tRNA ligase type 1 subfamily. As to quaternary structure, monomer.

The protein resides in the cytoplasm. It carries out the reaction tRNA(Glu) + L-glutamate + ATP = L-glutamyl-tRNA(Glu) + AMP + diphosphate. Its function is as follows. Catalyzes the attachment of glutamate to tRNA(Glu) in a two-step reaction: glutamate is first activated by ATP to form Glu-AMP and then transferred to the acceptor end of tRNA(Glu). This Shewanella amazonensis (strain ATCC BAA-1098 / SB2B) protein is Glutamate--tRNA ligase.